Here is a 545-residue protein sequence, read N- to C-terminus: Probable bifunctional tRNA threonylcarbamoyladenosine biosynthesis protein (545 aa).

Residues 1–329 form a kae1 region; that stretch reads MKNTFILGIE…YRTDDVKVTW (329 aa). Fe cation-binding residues include His113, His117, and Tyr134. L-threonylcarbamoyladenylate-binding positions include 134–138, Asp166, Gly179, Glu183, and Asn262; that span reads YVSGA. Asp290 serves as a coordination point for Fe cation. The region spanning 340 to 545 is the Protein kinase domain; the sequence is EISPGTSLKL…EEIKKRARYA (206 aa). ATP-binding positions include 353–361 and Lys375; that span reads LDNGAEAIV. The Proton acceptor; for kinase activity role is filled by Asp462.

In the N-terminal section; belongs to the KAE1 / TsaD family. The protein in the C-terminal section; belongs to the protein kinase superfamily. Tyr protein kinase family. BUD32 subfamily. As to quaternary structure, component of the KEOPS complex that consists of Kae1, Bud32, Cgi121 and Pcc1; the whole complex dimerizes. Fe(2+) is required as a cofactor.

The protein resides in the cytoplasm. The enzyme catalyses L-seryl-[protein] + ATP = O-phospho-L-seryl-[protein] + ADP + H(+). It carries out the reaction L-threonyl-[protein] + ATP = O-phospho-L-threonyl-[protein] + ADP + H(+). The catalysed reaction is L-threonylcarbamoyladenylate + adenosine(37) in tRNA = N(6)-L-threonylcarbamoyladenosine(37) in tRNA + AMP + H(+). Its function is as follows. Required for the formation of a threonylcarbamoyl group on adenosine at position 37 (t(6)A37) in tRNAs that read codons beginning with adenine. Is a component of the KEOPS complex that is probably involved in the transfer of the threonylcarbamoyl moiety of threonylcarbamoyl-AMP (TC-AMP) to the N6 group of A37. The Kae1 domain likely plays a direct catalytic role in this reaction. The Bud32 domain probably displays kinase activity that regulates Kae1 function. The protein is Probable bifunctional tRNA threonylcarbamoyladenosine biosynthesis protein of Methanosarcina barkeri (strain Fusaro / DSM 804).